Consider the following 778-residue polypeptide: Endonuclease MutS2 (778 aa).

An ATP-binding site is contributed by 328–335; it reads GPNTGGKT. A Smr domain is found at 702 to 777; sequence LDLRGKRYEE…GSGATIVTFK (76 aa).

It belongs to the DNA mismatch repair MutS family. MutS2 subfamily. In terms of assembly, homodimer. Binds to stalled ribosomes, contacting rRNA.

Functionally, endonuclease that is involved in the suppression of homologous recombination and thus may have a key role in the control of bacterial genetic diversity. Acts as a ribosome collision sensor, splitting the ribosome into its 2 subunits. Detects stalled/collided 70S ribosomes which it binds and splits by an ATP-hydrolysis driven conformational change. Acts upstream of the ribosome quality control system (RQC), a ribosome-associated complex that mediates the extraction of incompletely synthesized nascent chains from stalled ribosomes and their subsequent degradation. Probably generates substrates for RQC. The chain is Endonuclease MutS2 from Streptococcus pneumoniae (strain Taiwan19F-14).